We begin with the raw amino-acid sequence, 152 residues long: Actin-depolymerizing factor 2, isoform c (152 aa).

An ADF-H domain is found at 4-147 (GVKVDPSCKN…DEKSVKSDLM (144 aa)).

This sequence belongs to the actin-binding proteins ADF family.

Functionally, depolymerizes growing actin filaments in muscle cells; required for the assembly of actin filaments into the functional contractile myofilament lattice of muscle. The polypeptide is Actin-depolymerizing factor 2, isoform c (Caenorhabditis elegans).